The sequence spans 243 residues: Exosome complex component Rrp41 (243 aa).

Belongs to the RNase PH family. Rrp41 subfamily. Component of the archaeal exosome complex. Forms a hexameric ring-like arrangement composed of 3 Rrp41-Rrp42 heterodimers. The hexameric ring associates with a trimer of Rrp4 and/or Csl4 subunits.

Its subcellular location is the cytoplasm. In terms of biological role, catalytic component of the exosome, which is a complex involved in RNA degradation. Has 3'-&gt;5' exoribonuclease activity. Can also synthesize heteromeric RNA-tails. In Sulfurisphaera tokodaii (strain DSM 16993 / JCM 10545 / NBRC 100140 / 7) (Sulfolobus tokodaii), this protein is Exosome complex component Rrp41.